The primary structure comprises 145 residues: [Ribosomal protein bS18]-alanine N-acetyltransferase (145 aa).

The region spanning 1–145 (MIETIVEQDF…ENAVIMALYL (145 aa)) is the N-acetyltransferase domain. Residue 67–69 (LAV) participates in acetyl-CoA binding. Glu101 acts as the Proton acceptor in catalysis. An acetyl-CoA-binding site is contributed by Asn106. Tyr113 serves as the catalytic Proton donor.

This sequence belongs to the acetyltransferase family. RimI subfamily.

The protein localises to the cytoplasm. The enzyme catalyses N-terminal L-alanyl-[ribosomal protein bS18] + acetyl-CoA = N-terminal N(alpha)-acetyl-L-alanyl-[ribosomal protein bS18] + CoA + H(+). Its function is as follows. Acetylates the N-terminal alanine of ribosomal protein bS18. The protein is [Ribosomal protein bS18]-alanine N-acetyltransferase of Haemophilus ducreyi (strain 35000HP / ATCC 700724).